Consider the following 464-residue polypeptide: Kynureninase (464 aa).

At M1 the chain carries N-acetylmethionine. Pyridoxal 5'-phosphate contacts are provided by residues L137, T138, 165-168, S221, D250, H253, and Y275; that span reads FPSD. At K276 the chain carries N6-(pyridoxal phosphate)lysine. The pyridoxal 5'-phosphate site is built by W305 and N333.

The protein belongs to the kynureninase family. In terms of assembly, homodimer. It depends on pyridoxal 5'-phosphate as a cofactor.

Its subcellular location is the cytoplasm. It is found in the cytosol. It catalyses the reaction L-kynurenine + H2O = anthranilate + L-alanine + H(+). It carries out the reaction 3-hydroxy-L-kynurenine + H2O = 3-hydroxyanthranilate + L-alanine + H(+). Its pathway is amino-acid degradation; L-kynurenine degradation; L-alanine and anthranilate from L-kynurenine: step 1/1. It functions in the pathway cofactor biosynthesis; NAD(+) biosynthesis; quinolinate from L-kynurenine: step 2/3. In terms of biological role, catalyzes the cleavage of L-kynurenine (L-Kyn) and L-3-hydroxykynurenine (L-3OHKyn) into anthranilic acid (AA) and 3-hydroxyanthranilic acid (3-OHAA), respectively. Has a preference for the L-3-hydroxy form. Also has cysteine-conjugate-beta-lyase activity. The sequence is that of Kynureninase (Kynu) from Mus musculus (Mouse).